Consider the following 699-residue polypeptide: Elongation factor G (699 aa).

Residues 8-288 (EDYRNFGIMA…AVVDYLPSPM (281 aa)) form the tr-type G domain. Residues 17 to 24 (AHIDAGKT), 86 to 90 (DTPGH), and 140 to 143 (NKMD) each bind GTP.

The protein belongs to the TRAFAC class translation factor GTPase superfamily. Classic translation factor GTPase family. EF-G/EF-2 subfamily.

The protein localises to the cytoplasm. Its function is as follows. Catalyzes the GTP-dependent ribosomal translocation step during translation elongation. During this step, the ribosome changes from the pre-translocational (PRE) to the post-translocational (POST) state as the newly formed A-site-bound peptidyl-tRNA and P-site-bound deacylated tRNA move to the P and E sites, respectively. Catalyzes the coordinated movement of the two tRNA molecules, the mRNA and conformational changes in the ribosome. The sequence is that of Elongation factor G from Rhizobium johnstonii (strain DSM 114642 / LMG 32736 / 3841) (Rhizobium leguminosarum bv. viciae).